A 329-amino-acid chain; its full sequence is Ficolin-2 (329 aa).

An N-terminal signal peptide occupies residues 1–29 (MELGGAAGALGPSGPLLVCLCFGTLAAQA). The 60-residue stretch at 52 to 111 (GCPGLPGAPGLKGETGAAGLKGERGLPGVPGKAGPAGPKGSTGAQGEKGARGEKGESGQL) folds into the Collagen-like domain. Residues 64–113 (GETGAAGLKGERGLPGVPGKAGPAGPKGSTGAQGEKGARGEKGESGQLHS) form a disordered region. The segment covering 77-90 (LPGVPGKAGPAGPK) has biased composition (low complexity). Residues 112 to 329 (HSCATGPRTC…KVSEMKLRLT (218 aa)) enclose the Fibrinogen C-terminal domain. 2 disulfide bridges follow: Cys114–Cys142 and Cys121–Cys149. Asp265, Asp267, Ser269, and Ser271 together coordinate Ca(2+). The cysteines at positions 273 and 286 are disulfide-linked. An N-linked (GlcNAc...) asparagine glycan is attached at Asn316.

Belongs to the ficolin lectin family. In terms of assembly, homotrimer. Interacts with elastin. Interacts with MASP1 and MASP2.

It localises to the secreted. Its function is as follows. May function in innate immunity through activation of the lectin complement pathway. Calcium-dependent and GlcNAc-binding lectin. The sequence is that of Ficolin-2 (FCN2) from Bos taurus (Bovine).